Reading from the N-terminus, the 453-residue chain is UDP-N-acetylmuramoylalanine--D-glutamate ligase (453 aa).

Residue 120–126 participates in ATP binding; it reads GSNGKST.

Belongs to the MurCDEF family.

Its subcellular location is the cytoplasm. It carries out the reaction UDP-N-acetyl-alpha-D-muramoyl-L-alanine + D-glutamate + ATP = UDP-N-acetyl-alpha-D-muramoyl-L-alanyl-D-glutamate + ADP + phosphate + H(+). Its pathway is cell wall biogenesis; peptidoglycan biosynthesis. Cell wall formation. Catalyzes the addition of glutamate to the nucleotide precursor UDP-N-acetylmuramoyl-L-alanine (UMA). The polypeptide is UDP-N-acetylmuramoylalanine--D-glutamate ligase (Teredinibacter turnerae (strain ATCC 39867 / T7901)).